The sequence spans 356 residues: Tyrosine recombinase XerS (356 aa).

Positions 16–121 constitute a Core-binding (CB) domain; sequence IMPWYVLDYY…ALSSLYKYLT (106 aa). In terms of domain architecture, Tyr recombinase spans 169 to 354; sequence AFLDYVDKEY…VNDEQKNALD (186 aa). Active-site residues include Arg210, Lys234, His306, Arg309, and His332. The O-(3'-phospho-DNA)-tyrosine intermediate role is filled by Tyr341.

It belongs to the 'phage' integrase family. XerS subfamily.

The protein resides in the cytoplasm. With respect to regulation, ftsK is required for recombination. Site-specific tyrosine recombinase, which acts by catalyzing the cutting and rejoining of the recombining DNA molecules. Essential to convert dimers of the bacterial chromosome into monomers to permit their segregation at cell division. The chain is Tyrosine recombinase XerS from Streptococcus pyogenes serotype M1.